The following is a 178-amino-acid chain: Anthranilate synthase component 2 (178 aa).

A Glutamine amidotransferase type-1 domain is found at M1 to G178. An L-glutamine-binding site is contributed by G49–G51. The Nucleophile; for GATase activity role is filled by C71. L-glutamine-binding positions include Q75 and S120–L121. Catalysis depends on for GATase activity residues H155 and E157.

In terms of assembly, heterotetramer consisting of two non-identical subunits: a beta subunit (TrpG) and a large alpha subunit (TrpE).

It carries out the reaction chorismate + L-glutamine = anthranilate + pyruvate + L-glutamate + H(+). Its pathway is amino-acid biosynthesis; L-tryptophan biosynthesis; L-tryptophan from chorismate: step 1/5. Functionally, part of a heterotetrameric complex that catalyzes the two-step biosynthesis of anthranilate, an intermediate in the biosynthesis of L-tryptophan. In the first step, the glutamine-binding beta subunit (TrpG) of anthranilate synthase (AS) provides the glutamine amidotransferase activity which generates ammonia as a substrate that, along with chorismate, is used in the second step, catalyzed by the large alpha subunit of AS (TrpE) to produce anthranilate. In the absence of TrpG, TrpE can synthesize anthranilate directly from chorismate and high concentrations of ammonia. This chain is Anthranilate synthase component 2 (trpG), found in Archaeoglobus fulgidus (strain ATCC 49558 / DSM 4304 / JCM 9628 / NBRC 100126 / VC-16).